Consider the following 478-residue polypeptide: tRNA modification GTPase MnmE (478 aa).

3 residues coordinate (6S)-5-formyl-5,6,7,8-tetrahydrofolate: arginine 36, glutamate 94, and lysine 133. One can recognise a TrmE-type G domain in the interval 230-402 (GIHVVLAGRP…LVETLCAKVG (173 aa)). Asparagine 240 is a binding site for K(+). GTP-binding positions include 240–245 (NAGKSS), 259–265 (TDVAGTT), and 284–287 (DTAG). Serine 244 provides a ligand contact to Mg(2+). Positions 259, 261, and 264 each coordinate K(+). Threonine 265 is a Mg(2+) binding site. Lysine 478 is a (6S)-5-formyl-5,6,7,8-tetrahydrofolate binding site.

This sequence belongs to the TRAFAC class TrmE-Era-EngA-EngB-Septin-like GTPase superfamily. TrmE GTPase family. As to quaternary structure, homodimer. Heterotetramer of two MnmE and two MnmG subunits. K(+) is required as a cofactor.

The protein localises to the cytoplasm. Functionally, exhibits a very high intrinsic GTPase hydrolysis rate. Involved in the addition of a carboxymethylaminomethyl (cmnm) group at the wobble position (U34) of certain tRNAs, forming tRNA-cmnm(5)s(2)U34. The chain is tRNA modification GTPase MnmE from Psychrobacter cryohalolentis (strain ATCC BAA-1226 / DSM 17306 / VKM B-2378 / K5).